The primary structure comprises 115 residues: UPF0102 protein SYO3AOP1_0546 (115 aa).

Belongs to the UPF0102 family.

This is UPF0102 protein SYO3AOP1_0546 from Sulfurihydrogenibium sp. (strain YO3AOP1).